A 563-amino-acid polypeptide reads, in one-letter code: Envelope glycoprotein (563 aa).

The N-terminal stretch at 1 to 18 (MGFTTKIIFLYNLVLVYA) is a signal peptide. At 19 to 503 (GFDDPRKAIE…SNPLWTGLQG (485 aa)) the chain is on the extracellular side. N-linked (GlcNAc...) asparagine; by host glycosylation is found at Asn113, Asn219, and Asn229. The short motif at 236-239 (CWLC) is the CXXC element. 3 disulfide bridges follow: Cys236–Cys239, Cys236–Cys465, and Cys457–Cys464. N-linked (GlcNAc...) asparagine; by host glycosylation is found at Asn264, Asn282, Asn292, Asn306, Asn312, Asn321, and Asn339. Residues 380–400 (FIPLLAGLGITAAFTTGATGL) form a fusion peptide region. Coiled-coil stretches lie at residues 401 to 451 (GVSV…LLTA) and 461 to 497 (QEKC…SNPL). Residues 440–456 (LQNRRGLDLLTAEQGGI) are immunosuppression. Positions 457-465 (CLALQEKCC) match the CX6CC motif. Asn469 carries an N-linked (GlcNAc...) asparagine; by host glycan. Residues 504–524 (LLPYLLPFLGPLLTLLLLLTI) form a helical membrane-spanning segment. Residues 525 to 563 (GPCIFNRLTAFINDKLNIIHAMVLTQQYQVLRTDEEAQD) lie on the Cytoplasmic side of the membrane. Cys527 carries S-palmitoyl cysteine; by host lipidation. The short motif at 552–555 (YQVL) is the YXXL motif; contains endocytosis signal element.

As to quaternary structure, the mature envelope protein (Env) consists of a trimer of SU-TM heterodimers attached by a labile interchain disulfide bond. Specific enzymatic cleavages in vivo yield mature proteins. Envelope glycoproteins are synthesized as an inactive precursor that is N-glycosylated and processed likely by host cell furin or by a furin-like protease in the Golgi to yield the mature SU and TM proteins. The cleavage site between SU and TM requires the minimal sequence [KR]-X-[KR]-R. The R-peptide is released from the C-terminus of the cytoplasmic tail of the TM protein upon particle formation as a result of proteolytic cleavage by the viral protease. Cleavage of this peptide is required for TM to become fusogenic. In terms of processing, the CXXC motif is highly conserved across a broad range of retroviral envelope proteins. It is thought to participate in the formation of a labile disulfide bond possibly with the CX6CC motif present in the transmembrane protein. Isomerization of the intersubunit disulfide bond to an SU intrachain disulfide bond is thought to occur upon receptor recognition in order to allow membrane fusion. Post-translationally, the transmembrane protein is palmitoylated.

The protein resides in the virion membrane. The protein localises to the host cell membrane. In terms of biological role, the surface protein (SU) attaches the virus to the host cell by binding to its receptor. This interaction triggers the refolding of the transmembrane protein (TM) and is thought to activate its fusogenic potential by unmasking its fusion peptide. Fusion occurs at the host cell plasma membrane. Functionally, the transmembrane protein (TM) acts as a class I viral fusion protein. Under the current model, the protein has at least 3 conformational states: pre-fusion native state, pre-hairpin intermediate state, and post-fusion hairpin state. During viral and target cell membrane fusion, the coiled coil regions (heptad repeats) assume a trimer-of-hairpins structure, positioning the fusion peptide in close proximity to the C-terminal region of the ectodomain. The formation of this structure appears to drive apposition and subsequent fusion of viral and target cell membranes. Membranes fusion leads to delivery of the nucleocapsid into the cytoplasm. This Baboon endogenous virus (strain M7) protein is Envelope glycoprotein (env).